Reading from the N-terminus, the 213-residue chain is Protein ras-1 (213 aa).

A GTP-binding site is contributed by 15-22 (GGGGVGKS). Residues 37–45 (YDPTIEDSY) carry the Effector region motif. Residues 62-66 (DTAGQ) and 121-124 (NKYD) each bind GTP. At Cys210 the chain carries Cysteine methyl ester. Residue Cys210 is the site of S-farnesyl cysteine attachment. Residues 211-213 (IMM) constitute a propeptide, removed in mature form.

The protein belongs to the small GTPase superfamily. Ras family.

Its subcellular location is the cell membrane. The enzyme catalyses GTP + H2O = GDP + phosphate + H(+). Functionally, ras proteins bind GDP/GTP and possess intrinsic GTPase activity. The sequence is that of Protein ras-1 (ras-1) from Neurospora crassa (strain ATCC 24698 / 74-OR23-1A / CBS 708.71 / DSM 1257 / FGSC 987).